We begin with the raw amino-acid sequence, 257 residues long: UPF0246 protein Rsph17025_0016 (257 aa).

The protein belongs to the UPF0246 family.

The sequence is that of UPF0246 protein Rsph17025_0016 from Cereibacter sphaeroides (strain ATCC 17025 / ATH 2.4.3) (Rhodobacter sphaeroides).